The primary structure comprises 404 residues: CD209 antigen (404 aa).

Topologically, residues 1 to 37 are cytoplasmic; that stretch reads MSDSKEPRLQQLGLLEEEQLRGLGFRQTRGYKSLAGC. 3 short sequence motifs (endocytosis signal) span residues 14-15, 16-18, and 31-34; these read LL, EEE, and YKSL. Residues 38-58 form a helical; Signal-anchor for type II membrane protein membrane-spanning segment; the sequence is LGHGPLVLQLLSFTLLAGLLV. The Extracellular segment spans residues 59–404; it reads QVSKVPSSIS…APATPNPPPA (346 aa). N-linked (GlcNAc...) asparagine glycosylation is present at Asn-80. 7 consecutive repeat copies span residues 96–118, 119–141, 142–164, 165–187, 188–210, 211–233, and 234–257. The segment at 96-257 is 7 X approximate tandem repeats; that stretch reads KLQEIYQELT…AVERLCHPCP (162 aa). Disulfide bonds link Cys-256–Cys-267, Cys-284–Cys-377, and Cys-356–Cys-369. A C-type lectin domain is found at 263–378; it reads FQGNCYFMSN…CNLAKFWICK (116 aa). Glu-347, Asn-349, Val-351, Glu-354, Asn-365, and Asp-366 together coordinate Ca(2+).

Homotetramer. Interacts with C1QBP; the interaction is indicative for a C1q:C1QBP:CD209 signaling complex. Interacts with ICAM2 and ICAM3 by binding to mannose-like carbohydrates. Interacts (via C-type lectin domain) with CEACAM1 (via Lewis X moieties); this interaction is regulated by the glycosylation pattern of CEACAM1 on cell types and regulates contact between dendritic cells and neutrophils. As to quaternary structure, (Microbial infection) Interacts with HIV-1 and HIV-2 gp120. In terms of assembly, (Microbial infection) Interacts with ebolavirus envelope glycoproteins. (Microbial infection) Interacts with cytomegalovirus gB protein. As to quaternary structure, (Microbial infection) Interacts with HCV E2 protein. In terms of assembly, (Microbial infection) Interacts with dengue virus major envelope protein E. (Microbial infection) Interacts with measles hemagglutinin. As to quaternary structure, (Microbial infection) Interacts with herpes simplex virus 1 surface proteins. In terms of assembly, (Microbial infection) Interacts with Influenzavirus A hemagglutinin. (Microbial infection) Interacts with SARS-CoV spike glycoprotein. As to quaternary structure, (Microbial infection) Interacts with Japanese encephalitis virus E protein. In terms of assembly, (Microbial infection) Interacts with Lassa virus Glycoprotein. (Microbial infection) Interacts with marburg virus glycoprotein. As to quaternary structure, (Microbial infection) Interacts with Respiratory syncytial virus glycoprotein G. In terms of assembly, (Microbial infection) Interacts with Rift valley fever virus and uukuniemi virus envelope glycoprotein. (Microbial infection) Interacts with west-nile virus envelope glycoprotein. As to quaternary structure, (Microbial infection) Interacts with whole M.bovis cells in a Ca(2+)-dependent and independent manner; in vitro experiments suggest it interacts with CH60.1 (groL1), DnaK, GADPH (gap) and LrpG. In terms of tissue distribution, predominantly expressed in dendritic cells and in DC-residing tissues. Also found in placental macrophages, endothelial cells of placental vascular channels, peripheral blood mononuclear cells, and THP-1 monocytes.

The protein resides in the cell membrane. It is found in the secreted. Functionally, pathogen-recognition receptor expressed on the surface of immature dendritic cells (DCs) and involved in initiation of primary immune response. Thought to mediate the endocytosis of pathogens which are subsequently degraded in lysosomal compartments. The receptor returns to the cell membrane surface and the pathogen-derived antigens are presented to resting T-cells via MHC class II proteins to initiate the adaptive immune response. On DCs it is a high affinity receptor for ICAM2 and ICAM3 by binding to mannose-like carbohydrates. May act as a DC rolling receptor that mediates transendothelial migration of DC presursors from blood to tissues by binding endothelial ICAM2. Seems to regulate DC-induced T-cell proliferation by binding to ICAM3 on T-cells in the immunological synapse formed between DC and T-cells. In terms of biological role, (Microbial infection) Acts as an attachment receptor for HIV-1 and HIV-2. Its function is as follows. (Microbial infection) Acts as an attachment receptor for Ebolavirus. Functionally, (Microbial infection) Acts as an attachment receptor for Cytomegalovirus. (Microbial infection) Acts as an attachment receptor for HCV. In terms of biological role, (Microbial infection) Acts as an attachment receptor for Dengue virus. Its function is as follows. (Microbial infection) Acts as an attachment receptor for Measles virus. Functionally, (Microbial infection) Acts as an attachment receptor for Herpes simplex virus 1. (Microbial infection) Acts as an attachment receptor for Influenzavirus A. In terms of biological role, (Microbial infection) Acts as an attachment receptor for SARS-CoV. Its function is as follows. (Microbial infection) Acts as an attachment receptor for Japanese encephalitis virus. Functionally, (Microbial infection) Acts as an attachment receptor for Lassa virus. Acts as an attachment receptor for Marburg virusn. (Microbial infection) Acts as an attachment receptor for Respiratory syncytial virus. In terms of biological role, (Microbial infection) Acts as an attachment receptor for Rift valley fever virus and uukuniemi virus. Its function is as follows. (Microbial infection) Acts as an attachment receptor for West-nile virus. Functionally, (Microbial infection) Probably recognizes in a calcium-dependent manner high mannose N-linked oligosaccharides in a variety of bacterial pathogen antigens, including Leishmania pifanoi LPG, Lewis-x antigen in Helicobacter pylori LPS, mannose in Klebsiella pneumonae LPS, di-mannose and tri-mannose in Mycobacterium tuberculosis ManLAM and Lewis-x antigen in Schistosoma mansoni SEA. Recognition of M.tuberculosis by dendritic cells occurs partially via this molecule. The protein is CD209 antigen (CD209) of Homo sapiens (Human).